We begin with the raw amino-acid sequence, 154 residues long: Lipoprotein signal peptidase (154 aa).

The next 3 helical transmembrane spans lie at isoleucine 4–isoleucine 24, leucine 62–isoleucine 82, and glycine 84–isoleucine 104. Active-site residues include aspartate 114 and aspartate 130. The helical transmembrane segment at isoleucine 125–tryptophan 145 threads the bilayer.

The protein belongs to the peptidase A8 family.

It is found in the cell membrane. The catalysed reaction is Release of signal peptides from bacterial membrane prolipoproteins. Hydrolyzes -Xaa-Yaa-Zaa-|-(S,diacylglyceryl)Cys-, in which Xaa is hydrophobic (preferably Leu), and Yaa (Ala or Ser) and Zaa (Gly or Ala) have small, neutral side chains.. It functions in the pathway protein modification; lipoprotein biosynthesis (signal peptide cleavage). Functionally, this protein specifically catalyzes the removal of signal peptides from prolipoproteins. The polypeptide is Lipoprotein signal peptidase (Streptococcus agalactiae serotype Ia (strain ATCC 27591 / A909 / CDC SS700)).